A 262-amino-acid polypeptide reads, in one-letter code: 3-methyl-2-oxobutanoate hydroxymethyltransferase (262 aa).

2 residues coordinate Mg(2+): Asp-44 and Asp-83. 3-methyl-2-oxobutanoate contacts are provided by residues 44 to 45 (DS), Asp-83, and Lys-112. Glu-114 serves as a coordination point for Mg(2+). The Proton acceptor role is filled by Glu-180.

The protein belongs to the PanB family. In terms of assembly, homodecamer; pentamer of dimers. It depends on Mg(2+) as a cofactor.

The protein resides in the cytoplasm. It catalyses the reaction 3-methyl-2-oxobutanoate + (6R)-5,10-methylene-5,6,7,8-tetrahydrofolate + H2O = 2-dehydropantoate + (6S)-5,6,7,8-tetrahydrofolate. Its pathway is cofactor biosynthesis; (R)-pantothenate biosynthesis; (R)-pantoate from 3-methyl-2-oxobutanoate: step 1/2. Catalyzes the reversible reaction in which hydroxymethyl group from 5,10-methylenetetrahydrofolate is transferred onto alpha-ketoisovalerate to form ketopantoate. The sequence is that of 3-methyl-2-oxobutanoate hydroxymethyltransferase from Chromobacterium violaceum (strain ATCC 12472 / DSM 30191 / JCM 1249 / CCUG 213 / NBRC 12614 / NCIMB 9131 / NCTC 9757 / MK).